Here is a 674-residue protein sequence, read N- to C-terminus: Electrogenic aspartate/glutamate antiporter SLC25A13, mitochondrial (674 aa).

At alanine 2 the chain carries N-acetylalanine. Residues 2 to 295 (AAAKVALTKR…TLADIERIAP (294 aa)) are regulatory N-terminal domain. Over 2–331 (AAAKVALTKR…LLQVAESAYR (330 aa)) the chain is Mitochondrial intermembrane. EF-hand domains are found at residues 51-86 (SQPNPKTVELLSGVADQTKDGLISFQEFVAFESVLC), 87-122 (APDALFMVAFQLFDKAGKGEVTFEDVKQVFGQTTIH), 123-157 (QHIPFNWDSEFVQLHFGKERKRHLTYAEFTQFLLE), and 158-193 (IQLEHAKQAFVQRDNASTGRVTAIDFRDIMVTIRPH). Aspartate 66, threonine 68, aspartate 70, leucine 72, and glutamate 77 together coordinate Ca(2+). Positions 296 to 311 (LEEGTLPFNLAEAQRQ) are linker loop domain. The interval 321–611 (VLLQVAESAY…LQRWFYIDFG (291 aa)) is carrier domain. 3 Solcar repeats span residues 326 to 418 (AESA…VRDK), 426 to 510 (VPLA…ARAS), and 518 to 605 (VSPG…LQRW). A helical membrane pass occupies residues 332–349 (FGLGSVAGAVGATAVYPI). At 350–392 (DLVKTRMQNQRSTGSFVGELMYKNSFDCFKKVLRYEGFFGLYR) the chain is on the mitochondrial matrix side. N6-acetyllysine occurs at positions 353 and 372. A helical membrane pass occupies residues 393 to 412 (GLLPQLLGVAPEKAIKLTVN). Residues 413–435 (DFVRDKFMHKDGSVPLAAEILAG) lie on the Mitochondrial intermembrane side of the membrane. Residues 436-449 (GCAGGSQVIFTNPL) form a helical membrane-spanning segment. Residues 450 to 484 (EIVKIRLQVAGEITTGPRVSALSVVRDLGFFGIYK) lie on the Mitochondrial matrix side of the membrane. An N6-methyllysine modification is found at lysine 453. Residue lysine 484 is modified to N6-acetyllysine; alternate. Lysine 484 is modified (N6-succinyllysine; alternate). Residues 485 to 504 (GAKACFLRDIPFSAIYFPCY) form a helical membrane-spanning segment. Residues 505-523 (AHARASFANEDGQVSPGSL) are Mitochondrial intermembrane-facing. A helical transmembrane segment spans residues 524–541 (LLAGAIAGMPAASLVTPA). Residues 542 to 580 (DVIKTRLQVAARAGQTTYSGVIDCFKKILREEGPKALWK) are Mitochondrial matrix-facing. Lysine 580 carries the N6-succinyllysine modification. Residues 581–599 (GAARVFRSSPQFGVTLLTY) traverse the membrane as a helical segment. Residues 600-674 (ELLQRWFYID…PTSEAIGGGP (75 aa)) are Mitochondrial intermembrane-facing. The interval 612–674 (GVKPMGSEPV…PTSEAIGGGP (63 aa)) is C-terminal domain. Lysine 661 is subject to N6-acetyllysine.

The protein belongs to the mitochondrial carrier (TC 2.A.29) family. Homodimer (via N-terminus).

The protein localises to the mitochondrion inner membrane. It carries out the reaction L-aspartate(in) + L-glutamate(out) + H(+)(out) = L-aspartate(out) + L-glutamate(in) + H(+)(in). The enzyme catalyses 3-sulfino-L-alanine(out) + L-glutamate(in) + H(+)(in) = 3-sulfino-L-alanine(in) + L-glutamate(out) + H(+)(out). The catalysed reaction is 3-sulfino-L-alanine(out) + L-aspartate(in) = 3-sulfino-L-alanine(in) + L-aspartate(out). Its function is as follows. Mitochondrial electrogenic aspartate/glutamate antiporter that favors efflux of aspartate and entry of glutamate and proton within the mitochondria as part of the malate-aspartate shuttle. Also mediates the uptake of L-cysteinesulfinate (3-sulfino-L-alanine) by mitochondria in exchange of L-glutamate and proton. Can also exchange L-cysteinesulfinate with aspartate in their anionic form without any proton translocation. Lacks transport activity towards gamma-aminobutyric acid (GABA). The protein is Electrogenic aspartate/glutamate antiporter SLC25A13, mitochondrial of Macaca fascicularis (Crab-eating macaque).